The primary structure comprises 436 residues: MSLNDFLSSVLPVSEQFEYLSLQSIPLETHAVVTPNKDDKRVPKSTIKTQHFFSLFHQGKVFFSLEVYVYVTLWDEADAERLIFVSKADTNGYCNTRVSVRDITKIILEFILSIDPNYYLQKVKPAIRSYKKISPELISAASTPARTLRILARRLKQSGSTVLKEIESPRFQQDLYLSFTCPREILTKICLFTRPASQYLFPDSSKNSKKHILNGEELMKWWGFILDRLLIECFQNDTQAKLRIPGEDPARVRSYLRGMKYPLWQVGDIFTSKENSLAVYNIPLFPDDPKARFIHQLAEEDRLLKVSLSSFWIELQERQEFKLSVTSSVMGISGYSLATPSLFPSSADVIVPKSRKQFRAIKKYITGEEYDTEEGAIEAFTNIRDFLLLRMATNLQSLTGKREHRERNQPVPASNINTLAITMLKPRKKAKALPKT.

Residues 2-404 (SLNDFLSSVL…LQSLTGKREH (403 aa)) enclose the Rtt109-type HAT domain. Acetyl-CoA-binding positions include 88-90 (ADT) and 97-101 (RVSVR). Positions 128 to 170 (RSYKKISPELISAASTPARTLRILARRLKQSGSTVLKEIESPR) are interaction with VPS75. Residues Phe-192, Ala-196, 211–213 (HIL), and Trp-221 contribute to the acetyl-CoA site. Catalysis depends on Asp-288, which acts as the Proton donor/acceptor. Lys-290 is modified (N6-acetyllysine; by autocatalysis). Positions 419–433 (LAITMLKPRKKAKAL) are interaction with ASF1.

This sequence belongs to the RTT109 family. Forms a complex composed of two RTT109 subunits and one VPS75 homodimer; each RTT109 subunit interacts predominantly with VPS75 instead of interacting with the other RTT109 subunit. Interacts with VPS75; the interaction is direct. Interacts (via C-terminus) with ASF1; the interaction is direct. Interacts with histone H3/H4 heterodimers via histone H3.

Its subcellular location is the nucleus. The enzyme catalyses L-lysyl-[histone] + acetyl-CoA = N(6)-acetyl-L-lysyl-[histone] + CoA + H(+). The catalysed reaction is L-lysyl-[protein] + acetyl-CoA = N(6)-acetyl-L-lysyl-[protein] + CoA + H(+). Functionally, histone chaperone-dependent acetylase that modifies 'Lys-9', 'Lys-14', 'Lys-23', 'Lys-27', and 'Lys-56' on histone H3 (H3K9Ac, H3K14Ac and H3K23Ac, H3K27Ac, and H3K56Ac) to promote nucleosome assembly, genomic stability, DNA repair and transcriptional regulation during mitotic S-phase. Its residue selectivity is influenced by the acetylation status of histone H3, and also the presence of histone chaperone ASF1 that shifts selectivity to 'Lys-56' when H3K14Ac is already present. H3K56 acetylation weakens the interaction between the histone core and the surrounding DNA in the nucleosomal particle and drives chromatin disassembly. Autoacetylates. Independently of acetyltransferase activity, stimulates histone deposition by VPS75. Involved in regulation of Ty1 transposition. This chain is Histone acetyltransferase RTT109, found in Saccharomyces cerevisiae (strain ATCC 204508 / S288c) (Baker's yeast).